The primary structure comprises 323 residues: Movement protein (323 aa).

A coiled-coil region spans residues Ser292–Asn322.

Belongs to the caulimoviridae movement protein family. In terms of assembly, homotrimer, through the coiled-coil domain. Interacts with VAP.

The protein localises to the host cell junction. It localises to the host plasmodesma. Transports viral genome to neighboring plant cells directly through plasmosdesmata, without any budding. The movement protein allows efficient cell to cell propagation, by bypassing the host cell wall barrier. Acts by forming tubules structures that increase the size exclusion limit (SEL) of plasmodesmata, thereby allowing viral ribonucleocapsids to spread directly to neighboring cells. The polypeptide is Movement protein (Figwort mosaic virus (strain DxS) (FMV)).